The chain runs to 85 residues: Alpha-toxin Ac2 (85 aa).

The first 19 residues, 1–19 (MNYLVMISLALLFMTGVES), serve as a signal peptide directing secretion. The 63-residue stretch at 21 to 83 (KDGYIVDDRN…VRTKGPGRCK (63 aa)) folds into the LCN-type CS-alpha/beta domain. 4 disulfides stabilise this stretch: cysteine 31–cysteine 82, cysteine 35–cysteine 55, cysteine 41–cysteine 65, and cysteine 45–cysteine 67. Position 83 is a lysine amide (lysine 83).

It belongs to the long (4 C-C) scorpion toxin superfamily. Sodium channel inhibitor family. Alpha subfamily. As to expression, expressed by the venom gland.

It localises to the secreted. Alpha toxins bind voltage-independently at site-3 of sodium channels (Nav) and inhibit the inactivation of the activated channels, thereby blocking neuronal transmission. The polypeptide is Alpha-toxin Ac2 (Androctonus crassicauda (Arabian fat-tailed scorpion)).